A 138-amino-acid chain; its full sequence is Translation initiation factor 2 subunit beta (138 aa).

This sequence belongs to the eIF-2-beta/eIF-5 family. In terms of assembly, heterotrimer composed of an alpha, a beta and a gamma chain.

EIF-2 functions in the early steps of protein synthesis by forming a ternary complex with GTP and initiator tRNA. This chain is Translation initiation factor 2 subunit beta, found in Methanopyrus kandleri (strain AV19 / DSM 6324 / JCM 9639 / NBRC 100938).